The chain runs to 570 residues: Urease subunit alpha (570 aa).

Residues 131-570 form the Urease domain; that stretch reads GGMDSHIHFI…LPMAQRYFLF (440 aa). Ni(2+) is bound by residues histidine 136, histidine 138, and lysine 219. The residue at position 219 (lysine 219) is an N6-carboxylysine. Histidine 221 serves as a coordination point for substrate. Positions 248 and 274 each coordinate Ni(2+). Catalysis depends on histidine 322, which acts as the Proton donor. Aspartate 362 is a Ni(2+) binding site.

Belongs to the metallo-dependent hydrolases superfamily. Urease alpha subunit family. As to quaternary structure, heterotrimer of UreA (gamma), UreB (beta) and UreC (alpha) subunits. Three heterotrimers associate to form the active enzyme. Requires Ni cation as cofactor. Post-translationally, carboxylation allows a single lysine to coordinate two nickel ions.

The protein localises to the cytoplasm. The enzyme catalyses urea + 2 H2O + H(+) = hydrogencarbonate + 2 NH4(+). It functions in the pathway nitrogen metabolism; urea degradation; CO(2) and NH(3) from urea (urease route): step 1/1. In Rhizobium leguminosarum bv. trifolii (strain WSM2304), this protein is Urease subunit alpha.